A 1075-amino-acid chain; its full sequence is mRNA-binding protein PUF2 (1075 aa).

The disordered stretch occupies residues 38-68 (NTNARSVRVSDKRGRSSSTSPQKIGSYRTRA). At S72 the chain carries Phosphoserine. The span at 93-105 (TPVVVVPPTSSTP) shows a compositional bias: low complexity. The tract at residues 93–112 (TPVVVVPPTSSTPDSLNSTT) is disordered. Residue S198 is modified to Phosphoserine. Residues 316 to 402 (NTISISNVFP…APSTVSFARV (87 aa)) enclose the RRM domain. The region spanning 511 to 872 (ELNHLLQNAL…QLLEEVGLSS (362 aa)) is the PUM-HD domain. 6 Pumilio repeats span residues 574 to 611 (AIVM…IMLR), 612 to 647 (KCNK…NLVT), 649 to 683 (GVSD…FIFE), 684 to 719 (SVLS…QLLT), 722 to 758 (SLII…LILC), and 760 to 800 (KLVN…KIIH). 2 positions are modified to phosphoserine: S872 and S876. Disordered stretches follow at residues 874–931 (GISP…LNFN) and 997–1075 (NNYN…SYGY). Composition is skewed to low complexity over residues 901-916 (VSVS…HNSV), 997-1009 (NNYN…SQMN), and 1018-1063 (NNNN…NNNN).

The protein resides in the cytoplasm. RNA-binding protein involved in post-transcriptional regulation. Negatively regulates expression of COX17 by binding to the 3'-UTR of COX17 mRNA. Promotes decay of COX17 mRNA by enhancing its rate of deadenylation and subsequent turnover. Predominantly binds to mRNAs encoding membrane-associated proteins with roles in transmembrane transport and vesicular trafficking. In Saccharomyces cerevisiae (strain ATCC 204508 / S288c) (Baker's yeast), this protein is mRNA-binding protein PUF2 (PUF2).